A 216-amino-acid chain; its full sequence is Ras-related protein Rab11C (216 aa).

19-26 (GDSGVGKS) is a GTP binding site. An Effector region motif is present at residues 41 to 49 (SKSTIGVEF). Residues 67–71 (DTAGQ) and 125–128 (NKSD) contribute to the GTP site. 2 S-geranylgeranyl cysteine lipidation sites follow: C213 and C214.

This sequence belongs to the small GTPase superfamily. Rab family.

It localises to the cell membrane. The chain is Ras-related protein Rab11C (RAB11C) from Lotus japonicus (Lotus corniculatus var. japonicus).